The primary structure comprises 190 residues: MSNVPPPSGLSYQVKKKLEGKRDKDQENEALEWIEALTGLKLDRSKLYEDILKDGTVLCKLMNSIKPGCIKKINENATMPFKIMENISAFLEAMKGYGVPVADLFQTVDLFEKKDIAQVTRTLFALGRTCQTHPEYSGPVLGPKLATENKREFTEQQLREGQNVVSLQYGSNKGASQAGINMGKQRMIMD.

The disordered stretch occupies residues 1–23 (MSNVPPPSGLSYQVKKKLEGKRD). The Calponin-homology (CH) domain occupies 24 to 130 (KDQENEALEW…RTLFALGRTC (107 aa)). Residues 165 to 189 (VSLQYGSNKGASQAGINMGKQRMIM) form a Calponin-like repeat.

This sequence belongs to the calponin family. Muscle specific.

This chain is Myophilin, found in Echinococcus granulosus (Hydatid tapeworm).